The sequence spans 129 residues: DNA-directed RNA polymerase subunit omega (129 aa).

The tract at residues 76 to 100 is disordered; sequence EVDEPEPEAVPMIASGDSSGGEDSD.

This sequence belongs to the RNA polymerase subunit omega family. In terms of assembly, the RNAP catalytic core consists of 2 alpha, 1 beta, 1 beta' and 1 omega subunit. When a sigma factor is associated with the core the holoenzyme is formed, which can initiate transcription.

It carries out the reaction RNA(n) + a ribonucleoside 5'-triphosphate = RNA(n+1) + diphosphate. Functionally, promotes RNA polymerase assembly. Latches the N- and C-terminal regions of the beta' subunit thereby facilitating its interaction with the beta and alpha subunits. This is DNA-directed RNA polymerase subunit omega from Xanthobacter autotrophicus (strain ATCC BAA-1158 / Py2).